The primary structure comprises 345 residues: Phenylalanine--tRNA ligase alpha subunit (345 aa).

A Mg(2+)-binding site is contributed by glutamate 259.

This sequence belongs to the class-II aminoacyl-tRNA synthetase family. Phe-tRNA synthetase alpha subunit type 1 subfamily. In terms of assembly, tetramer of two alpha and two beta subunits. It depends on Mg(2+) as a cofactor.

It localises to the cytoplasm. It carries out the reaction tRNA(Phe) + L-phenylalanine + ATP = L-phenylalanyl-tRNA(Phe) + AMP + diphosphate + H(+). This chain is Phenylalanine--tRNA ligase alpha subunit, found in Nitrosomonas europaea (strain ATCC 19718 / CIP 103999 / KCTC 2705 / NBRC 14298).